The chain runs to 220 residues: Miraculin (220 aa).

Positions 1–29 are cleaved as a signal peptide; the sequence is MKELTMLSLSFFFVSALLAAAANPLLSAA. An N-linked (GlcNAc...) asparagine glycan is attached at N71. 3 disulfide bridges follow: C76-C121, C177-C188, and C181-C184. N215 is a glycosylation site (N-linked (GlcNAc...) asparagine).

Belongs to the protease inhibitor I3 (leguminous Kunitz-type inhibitor) family. As to quaternary structure, homotetramer; dimer of homodimer. Glycosylated; contains as much as 13,9% of sugars (glucosamine, mannose, galactose, xylose, and fucose). As to expression, expressed in fruit pulp after pollination. Not expressed in seeds, stems or leaves.

In terms of biological role, miraculin has the property of modifying a sour taste into a sweet taste. This alteration of taste perception persists for many minutes. This chain is Miraculin, found in Synsepalum dulcificum (Miracle fruit).